Consider the following 172-residue polypeptide: Translocon-associated protein subunit delta (172 aa).

The first 23 residues, 1-23 (MAAMASFGALALLLLSGLSCCSE), serve as a signal peptide directing secretion. Topologically, residues 24-143 (ACLEPQITPS…SVDHRGTWNG (120 aa)) are lumenal. An intrachain disulfide couples C25 to C56. A Glycyl lysine isopeptide (Lys-Gly) (interchain with G-Cter in ubiquitin) cross-link involves residue K72. The chain crosses the membrane as a helical span at residues 144–164 (PWVSTEVLAAVIGIVIYYLAF). Residues 165–172 (SAKSHIQA) lie on the Cytoplasmic side of the membrane.

Belongs to the TRAP-delta family. Heterotetramer of TRAP-alpha, TRAP-beta, TRAP-delta and TRAP-gamma.

It is found in the endoplasmic reticulum membrane. TRAP proteins are part of a complex whose function is to bind calcium to the ER membrane and thereby regulate the retention of ER resident proteins. The sequence is that of Translocon-associated protein subunit delta (Ssr4) from Mus musculus (Mouse).